Here is a 702-residue protein sequence, read N- to C-terminus: Cell adhesion molecule CEACAM5 (702 aa).

Positions 1–34 (MESPSAPPHRWCIPWQRLLLTASLLTFWNPPTTA) are cleaved as a signal peptide. The 110-residue stretch at 35–144 (KLTIESTPFN…TGQFRVYPEL (110 aa)) folds into the Ig-like V-type domain. 28 N-linked (GlcNAc...) asparagine glycosylation sites follow: N104, N115, N152, N182, N197, N204, N208, N246, N256, N274, N288, N292, N309, N330, N351, N360, N375, N432, N466, N480, N508, N529, N553, N560, N580, N612, N650, and N665. Ig-like C2-type domains are found at residues 145 to 232 (PKPS…VILN), 240 to 315 (PTIS…TVTT), 323 to 410 (PKPF…VILN), 418 to 495 (PTIS…KTIT), 501 to 588 (PKPS…VTLD), and 593 to 675 (PDTP…ITVS). A disulfide bridge links C167 with C215. C259 and C299 are joined by a disulfide. The cysteines at positions 345 and 393 are disulfide-linked. Cysteines 437 and 477 form a disulfide. C523 and C571 are oxidised to a cystine. Cysteines 615 and 655 form a disulfide. Residue A685 is the site of GPI-anchor amidated alanine attachment. Residues 686 to 702 (GATVGIMIGVLVGVALI) constitute a propeptide, removed in mature form.

The protein belongs to the immunoglobulin superfamily. CEA family. Homodimer. In terms of processing, complex immunoreactive glycoprotein with a MW of 180 kDa comprising 60% carbohydrate. Expressed in columnar epithelial and goblet cells of the colon (at protein level). Found in adenocarcinomas of endodermally derived digestive system epithelium and fetal colon.

Its subcellular location is the cell membrane. The protein resides in the apical cell membrane. The protein localises to the cell surface. Its function is as follows. Cell surface glycoprotein that plays a role in cell adhesion, intracellular signaling and tumor progression. Mediates homophilic and heterophilic cell adhesion with other carcinoembryonic antigen-related cell adhesion molecules, such as CEACAM6. Plays a role as an oncogene by promoting tumor progression; induces resistance to anoikis of colorectal carcinoma cells. Functionally, (Microbial infection) Receptor for E.coli Dr adhesins. Binding of E.coli Dr adhesins leads to dissociation of the homodimer. The chain is Cell adhesion molecule CEACAM5 from Homo sapiens (Human).